The sequence spans 264 residues: Shikimate dehydrogenase (NADP(+)) (264 aa).

Shikimate-binding positions include 14-16 and threonine 61; that span reads SVS. The Proton acceptor role is filled by lysine 65. Asparagine 85 and aspartate 99 together coordinate shikimate. Residues 122–126, 145–150, and alanine 208 contribute to the NADP(+) site; these read GAGGA and NRTVSR. Residue tyrosine 210 participates in shikimate binding. Glycine 231 serves as a coordination point for NADP(+).

This sequence belongs to the shikimate dehydrogenase family. In terms of assembly, homodimer.

The catalysed reaction is shikimate + NADP(+) = 3-dehydroshikimate + NADPH + H(+). The protein operates within metabolic intermediate biosynthesis; chorismate biosynthesis; chorismate from D-erythrose 4-phosphate and phosphoenolpyruvate: step 4/7. Its function is as follows. Involved in the biosynthesis of the chorismate, which leads to the biosynthesis of aromatic amino acids. Catalyzes the reversible NADPH linked reduction of 3-dehydroshikimate (DHSA) to yield shikimate (SA). This is Shikimate dehydrogenase (NADP(+)) from Natronomonas pharaonis (strain ATCC 35678 / DSM 2160 / CIP 103997 / JCM 8858 / NBRC 14720 / NCIMB 2260 / Gabara) (Halobacterium pharaonis).